The primary structure comprises 1214 residues: Inner capsid protein VP3 (1214 aa).

The segment at Met-1 to Thr-80 is disordered. A compositionally biased stretch (polar residues) spans Lys-8–Asp-18. Positions Pro-28–Ala-51 are enriched in low complexity. Residues Tyr-117–His-140 form a C2H2-type zinc finger.

The protein belongs to the turreted BTV-fold inner capsid family. Homodecamer; each decamer is made up of two conformers of VP2, called VP2A and VP2B. 12 homodecamers assemble to form an icosahedral capsid. Interacts with VP6.

Its subcellular location is the virion. Inner capsid protein that self-assembles to form an icosahedral capsid with a T=2 symmetry, which consists of 120 copies of VP2, with channels at each of its five-fold vertices. This capsid constitutes the innermost concentric layer of the viral mature particle. The polypeptide is Inner capsid protein VP3 (S3) (Notemigonus crysoleucas (Golden shiner)).